Consider the following 283-residue polypeptide: MAVPPTYADLGKSARDVFTKGYGFGLIKLDLKTKSENGLEFTSSGSANTETTKVTGSLETKYRWTEYGLTFTEKWNTDNTLGTEITVEDQLARGLKLTFDSSFSPNTGKKNAKIKTGYKREHVNLGCDVDFDIAGPSIRGALVLGYEGWLAGYQMNFETAKSRVTQSNFAVGYKTDEFQLHTNVNDGTEFGGSIYQKVNKKLETAVNLAWTAGNSNTRFGIAAKYQIDPDACFSAKVNNSSLIGLGYTQTLKPGIKLTLSALLDGKNVNAGGHKLGLGLEFQA.

Ala2 carries the post-translational modification N-acetylalanine. Residue Lys12 participates in ATP binding. Lys12 is covalently cross-linked (Glycyl lysine isopeptide (Lys-Gly) (interchain with G-Cter in ubiquitin)). Ser13 is modified (phosphoserine). At Thr19 the chain carries Phosphothreonine. Lys20 lines the ATP pocket. Lys20 carries the N6-acetyllysine; alternate modification. Lys20 is modified (N6-succinyllysine; alternate). Residue Lys20 forms a Glycyl lysine isopeptide (Lys-Gly) (interchain with G-Cter in ubiquitin); alternate linkage. 2 beta stranded membrane-spanning segments follow: residues 26–35 (LIKLDLKTKS) and 39–47 (LEFTSSGSA). Residues Lys53 and Lys61 each participate in a glycyl lysine isopeptide (Lys-Gly) (interchain with G-Cter in ubiquitin) cross-link. The beta stranded transmembrane segment at 54–64 (VTGSLETKYRW) threads the bilayer. Position 67 is a phosphotyrosine (Tyr67). 3 beta stranded membrane-spanning segments follow: residues 69 to 76 (LTFTEKWN), 80 to 89 (TLGTEITVED), and 95 to 104 (LKLTFDSSFS). Thr107 carries the post-translational modification Phosphothreonine. Lys109 is modified (N6-acetyllysine; alternate). Lys109 is covalently cross-linked (Glycyl lysine isopeptide (Lys-Gly) (interchain with G-Cter in ubiquitin); alternate). A Glycyl lysine isopeptide (Lys-Gly) (interchain with G-Cter in ubiquitin) cross-link involves residue Lys110. The next 4 membrane-spanning stretches (beta stranded) occupy residues 111 to 120 (NAKIKTGYKR), 123 to 130 (VNLGCDVD), 137 to 145 (SIRGALVLG), and 150 to 158 (LAGYQMNFE). A Glycyl lysine isopeptide (Lys-Gly) (interchain with G-Cter in ubiquitin) cross-link involves residue Lys161. The next 6 beta stranded transmembrane spans lie at 163 to 175 (RVTQ…GYKT), 178 to 185 (FQLHTNVN), 189 to 198 (EFGGSIYQKV), 202 to 211 (LETAVNLAWT), 218 to 227 (RFGIAAKYQI), and 231 to 238 (ACFSAKVN). Ser193 is subject to Phosphoserine; by NEK1. Ser240 is subject to Phosphoserine. Position 242-244 (242-244 (LIG)) interacts with NAD(+). Residues 242–251 (LIGLGYTQTL) form a beta stranded membrane-spanning segment. N6-acetyllysine is present on Lys252. A beta stranded membrane pass occupies residues 254-263 (GIKLTLSALL). An NAD(+)-binding site is contributed by 260–264 (SALLD). Lys266 is modified (N6-acetyllysine; alternate). A Glycyl lysine isopeptide (Lys-Gly) (interchain with G-Cter in ubiquitin); alternate cross-link involves residue Lys266. A beta stranded membrane pass occupies residues 273-282 (HKLGLGLEFQ). Residue Lys274 forms a Glycyl lysine isopeptide (Lys-Gly) (interchain with G-Cter in ubiquitin) linkage.

This sequence belongs to the eukaryotic mitochondrial porin family. As to quaternary structure, homodimer and homotrimer; in response to cyclic AMP or calcium; oligomerization is required for scramblase activity. Component of the mitochondrial permeability transition pore complex (mPTPC), at least composed of SPG7, VDAC1 and PPIF. Interacts with SPG7, NIPSNAP2 and SLC25A30. Interacts with hexokinases including HK1. The HK1-VDAC1 complex interacts with ATF2. Interacts with BCL2L1. Interacts with BAK1. Interacts with RTL10/BOP (via BH3 domain). Interacts with amyloid-beta and APP; induces VDAC1 dephosphorylation. Interacts with TMEM41B. Interacts with BCAP31. Interacts with HSPA9; this interaction couples ITPR1 to VDAC1. Post-translationally, phosphorylation at Ser-193 by NEK1 promotes the closed conformational state preventing excessive mitochondrial membrane permeability and subsequent apoptotic cell death after injury. Phosphorylation by the AKT-GSK3B axis stabilizes the protein probably by preventing ubiquitin-mediated proteasomal degradation. Ubiquitinated. Undergoes monoubiquitination and polyubiquitination by PRKN; monoubiquitination at Lys-274 inhibits apoptosis, whereas polyubiquitination leads to its degradation and promotes mitophagy. Deubiquitinated by USP30.

It localises to the mitochondrion outer membrane. The protein resides in the cell membrane. The protein localises to the membrane raft. The catalysed reaction is chloride(in) = chloride(out). It carries out the reaction K(+)(in) = K(+)(out). The enzyme catalyses ATP(in) = ATP(out). It catalyses the reaction Ca(2+)(in) = Ca(2+)(out). The catalysed reaction is Na(+)(in) = Na(+)(out). It carries out the reaction Mg(2+)(in) = Mg(2+)(out). The enzyme catalyses L-glutamate(out) = L-glutamate(in). It catalyses the reaction dopamine(out) = dopamine(in). The catalysed reaction is acetylcholine(in) = acetylcholine(out). It carries out the reaction Fe(III)-[cytochrome c](out) = Fe(III)-[cytochrome c](in). The enzyme catalyses a 1,2-diacyl-sn-glycero-3-phosphocholine(in) = a 1,2-diacyl-sn-glycero-3-phosphocholine(out). It catalyses the reaction a 1,2-diacyl-sn-glycero-3-phospho-L-serine(in) = a 1,2-diacyl-sn-glycero-3-phospho-L-serine(out). With respect to regulation, inhibited by nitric oxide. Functionally, non-selective voltage-gated ion channel that mediates the transport of anions and cations through the mitochondrion outer membrane and plasma membrane. The channel at the outer mitochondrial membrane allows diffusion of small hydrophilic molecules; in the plasma membrane it is involved in cell volume regulation and apoptosis. It adopts an open conformation at low or zero membrane potential and a closed conformation at potentials above 30-40 mV. The open state has a weak anion selectivity whereas the closed state is cation-selective. Binds various signaling molecules, including the sphingolipid ceramide, the phospholipid phosphatidylcholine, and the sterols cholesterol and oxysterol. In depolarized mitochondria, acts downstream of PRKN and PINK1 to promote mitophagy or prevent apoptosis; polyubiquitination by PRKN promotes mitophagy, while monoubiquitination by PRKN decreases mitochondrial calcium influx which ultimately inhibits apoptosis. May participate in the formation of the permeability transition pore complex (PTPC) responsible for the release of mitochondrial products that triggers apoptosis. May mediate ATP export from cells. Part of a complex composed of HSPA9, ITPR1 and VDAC1 that regulates mitochondrial calcium-dependent apoptosis by facilitating calcium transport from the ER lumen to the mitochondria intermembrane space thus providing calcium for the downstream calcium channel MCU that directly releases it into mitochondria matrix. Mediates cytochrome c efflux. Its function is as follows. Catalyzes the scrambling of phospholipids across the outer mitochondrial membrane; the mechanism is unrelated to channel activity and is capable of translocating both anionic and zwitterionic phospholipids. The sequence is that of Non-selective voltage-gated ion channel VDAC1 from Sus scrofa (Pig).